The sequence spans 210 residues: MELQLAIDLLNKEDAAELANKVKDYVDIVEIGTPIIYNEGLPAVKHMADNISNVKVLADMKIMDAADYEVSQAIKFGADVITILGVAEDASIKTAIEEAHKNNKQLLVDMIAVQDLEKRAKELDEMGADYIAVHTGYDLQAEGQSPLESLRTVKSVIKNSKVAVAGGIKPDTIKEIVAESPDLVIVGGGIANADDPVEAAKQCRAAIEGK.

The protein belongs to the HPS/KGPDC family. HPS subfamily.

The enzyme catalyses D-ribulose 5-phosphate + formaldehyde = D-arabino-hex-3-ulose 6-phosphate. It participates in one-carbon metabolism; formaldehyde assimilation via RuMP pathway; D-fructose 6-phosphate from D-ribulose 5-phosphate and formaldehyde: step 1/2. Functionally, catalyzes the condensation of ribulose 5-phosphate with formaldehyde to form 3-hexulose 6-phosphate. The polypeptide is 3-hexulose-6-phosphate synthase (Staphylococcus aureus (strain bovine RF122 / ET3-1)).